A 178-amino-acid polypeptide reads, in one-letter code: uncharacterized protein (178 aa).

The protein belongs to the tail fiber family.

This is an uncharacterized protein from Escherichia coli (strain K12).